A 37-amino-acid chain; its full sequence is Mu-agatoxin-Aa1b (37 aa).

Disulfide bonds link C2–C18, C9–C23, C17–C33, and C25–C31. S37 is subject to Serine amide.

This sequence belongs to the neurotoxin 07 (Beta/delta-agtx) family. 01 (aga-2) subfamily. As to expression, expressed by the venom gland.

The protein resides in the secreted. In terms of biological role, insecticidal neurotoxin that induces an irreversible spastic paralysis when injected into insects. Modifies presynaptic voltage-gated sodium channels (Nav), causing them to open at the normal resting potential of the nerve. This leads to spontaneous release of neurotransmitter and repetitive action potentials in motor neurons. This is Mu-agatoxin-Aa1b from Agelenopsis aperta (North American funnel-web spider).